Reading from the N-terminus, the 527-residue chain is Arginine--tRNA ligase (527 aa).

The short motif at alanine 108 to histidine 118 is the 'HIGH' region element.

The protein belongs to the class-I aminoacyl-tRNA synthetase family. In terms of assembly, monomer.

The protein resides in the cytoplasm. The enzyme catalyses tRNA(Arg) + L-arginine + ATP = L-arginyl-tRNA(Arg) + AMP + diphosphate. In Sulfurimonas denitrificans (strain ATCC 33889 / DSM 1251) (Thiomicrospira denitrificans (strain ATCC 33889 / DSM 1251)), this protein is Arginine--tRNA ligase.